The sequence spans 328 residues: DNA-directed RNA polymerase subunit alpha (328 aa).

The tract at residues 1–234 is alpha N-terminal domain (alpha-NTD); the sequence is MQGSVTEFLK…EQLDAFVDLR (234 aa). Residues 248–328 form an alpha C-terminal domain (alpha-CTD) region; that stretch reads FXPILLRPVD…NWPPASIAED (81 aa).

Belongs to the RNA polymerase alpha chain family. As to quaternary structure, homodimer. The RNAP catalytic core consists of 2 alpha, 1 beta, 1 beta' and 1 omega subunit. When a sigma factor is associated with the core the holoenzyme is formed, which can initiate transcription.

The enzyme catalyses RNA(n) + a ribonucleoside 5'-triphosphate = RNA(n+1) + diphosphate. Functionally, DNA-dependent RNA polymerase catalyzes the transcription of DNA into RNA using the four ribonucleoside triphosphates as substrates. This is DNA-directed RNA polymerase subunit alpha from Haemophilus influenzae (strain ATCC 51907 / DSM 11121 / KW20 / Rd).